The chain runs to 287 residues: Membrane protein insertase YidC 2 (287 aa).

The first 26 residues, 1-26 (MKKKKRFKQKLLIASLVIGLVAVLSG), serve as a signal peptide directing secretion. A lipid anchor (N-palmitoyl cysteine) is attached at C27. Residue C27 is the site of S-diacylglycerol cysteine attachment. The next 5 membrane-spanning stretches (helical) occupy residues 65-85 (YAVGIIVVTILIRLLIMPLMI), 135-155 (MMGCLPLLIQMPILLGFYQAI), 178-198 (YILPIVAALTTFLSSKISMMG), 207-224 (AMIVYIMPVMILFMGITL), and 228-250 (LALYWIIGNIFTVFQTLLINNPF).

It belongs to the OXA1/ALB3/YidC family. Type 2 subfamily.

The protein resides in the cell membrane. In terms of biological role, required for the insertion and/or proper folding and/or complex formation of integral membrane proteins into the membrane. Involved in integration of membrane proteins that insert both dependently and independently of the Sec translocase complex, as well as at least some lipoproteins. The polypeptide is Membrane protein insertase YidC 2 (Listeria innocua serovar 6a (strain ATCC BAA-680 / CLIP 11262)).